The chain runs to 200 residues: Nucleoside triphosphate pyrophosphatase (200 aa).

The active-site Proton acceptor is Asp-79.

Belongs to the Maf family. It depends on a divalent metal cation as a cofactor.

It is found in the cytoplasm. The enzyme catalyses a ribonucleoside 5'-triphosphate + H2O = a ribonucleoside 5'-phosphate + diphosphate + H(+). The catalysed reaction is a 2'-deoxyribonucleoside 5'-triphosphate + H2O = a 2'-deoxyribonucleoside 5'-phosphate + diphosphate + H(+). Its function is as follows. Nucleoside triphosphate pyrophosphatase. May have a dual role in cell division arrest and in preventing the incorporation of modified nucleotides into cellular nucleic acids. The chain is Nucleoside triphosphate pyrophosphatase from Legionella pneumophila subsp. pneumophila (strain Philadelphia 1 / ATCC 33152 / DSM 7513).